Here is a 1293-residue protein sequence, read N- to C-terminus: Enterobactin synthase component F (1293 aa).

Residues 1–301 form an elongation/condensation region; the sequence is MSQHLPLVAA…NVLPLGIHIA (301 aa). The interval 482 to 887 is adenylatione; the sequence is SYREMREQVV…ALPDVEQAVT (406 aa). One can recognise a Carrier domain in the interval 971–1046; it reads APKAGSETII…KLATIIDAEE (76 aa). An O-(pantetheine 4'-phosphoryl)serine modification is found at Ser-1006. The segment at 1066–1293 is thioesterase; it reads PTLFCFHPAS…GPIIRATLNR (228 aa). The active-site Proton acceptor; for thioesterase activity is His-1271.

It belongs to the ATP-dependent AMP-binding enzyme family. EntF subfamily. In terms of assembly, proteins EntB, EntD, EntE and EntF are the component of the enterobactin synthase. Components probably do not form a stable complex. EntF acts as a catalytic monomer. Interacts with the MbtH-like protein YbdZ. YbdZ binds to the adenylation domain, but does not alter the structure of the domain. Pantetheine 4'-phosphate serves as cofactor. Post-translationally, 4'-phosphopantetheine is transferred from CoA to a specific serine of apo-EntF by EntD. Holo-EntF so formed is then acylated with seryl-AMP.

Its subcellular location is the cytoplasm. It carries out the reaction 3 2,3-dihydroxybenzoate + 3 L-serine + 6 ATP = enterobactin + 6 AMP + 6 diphosphate + 4 H(+). It catalyses the reaction holo-[peptidyl-carrier protein] + L-serine + ATP = L-seryl-[peptidyl-carrier protein] + AMP + diphosphate. Its pathway is siderophore biosynthesis; enterobactin biosynthesis. Adenylation activity is increased in the presence of the MbtH-like protein YbdZ. Involved in the biosynthesis of the siderophore enterobactin (enterochelin), which is a macrocyclic trimeric lactone of N-(2,3-dihydroxybenzoyl)-serine. EntF catalyzes the activation of L-serine via ATP-dependent PPi exchange reaction to form seryladenylate. Activated L-serine is loaded onto the peptidyl carrier domain via a thioester linkage to the phosphopanthetheine moiety, forming seryl-S-Ppant-EntF. EntF acts then as the sole catalyst for the formation of the three amide and three ester linkages found in enterobactin, using seryladenylate and 2,3-dihydroxybenzoate-S-Ppant-EntB (DHB-S-Ppant-EntB) as substrates, via the formation of a DHB-Ser-S-Ppant-EntF intermediate. The polypeptide is Enterobactin synthase component F (Escherichia coli (strain K12)).